The following is a 124-amino-acid chain: Small ribosomal subunit protein uS12 (124 aa).

At D89 the chain carries 3-methylthioaspartic acid.

Belongs to the universal ribosomal protein uS12 family. In terms of assembly, part of the 30S ribosomal subunit. Contacts proteins S8 and S17. May interact with IF1 in the 30S initiation complex.

In terms of biological role, with S4 and S5 plays an important role in translational accuracy. Functionally, interacts with and stabilizes bases of the 16S rRNA that are involved in tRNA selection in the A site and with the mRNA backbone. Located at the interface of the 30S and 50S subunits, it traverses the body of the 30S subunit contacting proteins on the other side and probably holding the rRNA structure together. The combined cluster of proteins S8, S12 and S17 appears to hold together the shoulder and platform of the 30S subunit. This chain is Small ribosomal subunit protein uS12, found in Edwardsiella ictaluri (strain 93-146).